The primary structure comprises 413 residues: Docking protein 2 (413 aa).

The PH domain maps to 4 to 114 (VVVKQGFLYL…WIQAICLLAF (111 aa)). The IRS-type PTB domain maps to 147-252 (PQKEFAVTVR…SAQKNAAPPG (106 aa)). A disordered region spans residues 247–292 (NAAPPGPQTQPVPVPAVLPRPESPYARPHDSLPPPSPTVPVPTPRQ). Residues 250–268 (PPGPQTQPVPVPAVLPRPE) show a composition bias toward pro residues. Tyr271 carries the post-translational modification Phosphotyrosine. Over residues 277–289 (SLPPPSPTVPVPT) the composition is skewed to pro residues. 2 positions are modified to phosphotyrosine: Tyr300 and Tyr346. Positions 362 to 381 (QEPRGEAWRRQATADRDSSG) are enriched in basic and acidic residues. The tract at residues 362–383 (QEPRGEAWRRQATADRDSSGLK) is disordered.

The protein belongs to the DOK family. Type A subfamily. Interacts with phosphorylated RASGAP and EGFR. Interacts with RET and NCK. Interacts (via PH domain) with TEK/TIE2 (tyrosine phosphorylated). In terms of processing, on immunoreceptor stimulation, phosphorylated on C-terminal tyrosine residues. Phosphorylation on Tyr-346 is required for binding to the SH2 domain of NCK. Phosphorylation on both Tyr-271 and Tyr-300 is required for interaction with RASGAP. Phosphorylated on tyrosine residues by TEK/TIE2.

DOK proteins are enzymatically inert adaptor or scaffolding proteins. They provide a docking platform for the assembly of multimolecular signaling complexes. DOK2 may modulate the cellular proliferation induced by IL-4, as well as IL-2 and IL-3. May be involved in modulating Bcr-Abl signaling. Attenuates EGF-stimulated MAP kinase activation. In Bos taurus (Bovine), this protein is Docking protein 2 (DOK2).